The primary structure comprises 66 residues: Beta-toxin Chui3 (66 aa).

An LCN-type CS-alpha/beta domain is found at 1-66; the sequence is KEGYLVELGT…VWPLKNKTCR (66 aa). Disulfide bonds link Cys-12-Cys-65, Cys-16-Cys-41, Cys-25-Cys-46, and Cys-29-Cys-48.

This sequence belongs to the long (4 C-C) scorpion toxin superfamily. Sodium channel inhibitor family. Beta subfamily. As to expression, expressed by the venom gland.

Its subcellular location is the secreted. In terms of biological role, beta toxins bind voltage-independently at site-4 of sodium channels (Nav) and shift the voltage of activation toward more negative potentials thereby affecting sodium channel activation and promoting spontaneous and repetitive firing. Acts on human sodium channel Nav1.6/SCN8A. The polypeptide is Beta-toxin Chui3 (Centruroides huichol (Scorpion)).